The following is a 481-amino-acid chain: MGDVIVLYAAPGMGHIVSMVELGKLIVHRYGPHKFSITILYTCGSVVDITSISAYIRRISHSHPSISFRQFPRVTNKITRNISGAAIMFDFIRQNDPHVRRALQEISKSVAVRAFIIDLFCTSALPIGKEFNIPTYYFYTSGAAALAAFLYFPKIDEQTTESFQDLRDTVFEFPGWKSPLKAIHMVEPVLDRNDPAYSDMIYFCSQLPKSNGIIVNTFEELESSNVLQAIAGGLCVPDGPTPPVYYVGPLIDEEKELSNDAAAAEEEDCLSWLDKQPSRSVLFLCFGSRGSFPAVQLKEIANGLEASGQRFLWVVKKPPVEEKTKQVHGVDDFDLKGVLPEGFLERTADRGMVVKSWAPQVVVLKKESVGGFVTHCGWNSVLEAVVAGVPMIAWPLYAEQHMNRNVLVTDMEIAIGVEQRDEEDGFVSGEEVERRVRELMESEGGRVLRERCKKIGEMALAALGETGSSTRNFVNFVSSIT.

UDP-alpha-D-glucose contacts are provided by residues Ser-288, 357–358, 375–383, and 397–400; these read WA, HCGWNSVLE, and YAEQ.

The protein belongs to the UDP-glycosyltransferase family.

Its function is as follows. Glycosyltransferase that may possess chalcone and dihydrochalcone 2'-O-glucosyltransferase activity. In Malus domestica (Apple), this protein is UDP-glycosyltransferase 88F4.